The primary structure comprises 610 residues: Elongation factor 4 (610 aa).

One can recognise a tr-type G domain in the interval 11–193; the sequence is ENIRNFSIIA…QIVEKVPAPS (183 aa). Residues 23–28 and 140–143 contribute to the GTP site; these read DHGKST and NKID.

It belongs to the TRAFAC class translation factor GTPase superfamily. Classic translation factor GTPase family. LepA subfamily.

The protein resides in the cell membrane. It carries out the reaction GTP + H2O = GDP + phosphate + H(+). Its function is as follows. Required for accurate and efficient protein synthesis under certain stress conditions. May act as a fidelity factor of the translation reaction, by catalyzing a one-codon backward translocation of tRNAs on improperly translocated ribosomes. Back-translocation proceeds from a post-translocation (POST) complex to a pre-translocation (PRE) complex, thus giving elongation factor G a second chance to translocate the tRNAs correctly. Binds to ribosomes in a GTP-dependent manner. The polypeptide is Elongation factor 4 (Streptococcus equi subsp. zooepidemicus (strain H70)).